A 188-amino-acid polypeptide reads, in one-letter code: ATP synthase subunit b (188 aa).

The helical transmembrane segment at 5–25 (MLLIFMMIVMIASSAMAAEAE) threads the bilayer.

The protein belongs to the ATPase B chain family. In terms of assembly, F-type ATPases have 2 components, F(1) - the catalytic core - and F(0) - the membrane proton channel. F(1) has five subunits: alpha(3), beta(3), gamma(1), delta(1), epsilon(1). F(0) has three main subunits: a(1), b(2) and c(10-14). The alpha and beta chains form an alternating ring which encloses part of the gamma chain. F(1) is attached to F(0) by a central stalk formed by the gamma and epsilon chains, while a peripheral stalk is formed by the delta and b chains.

The protein localises to the cell inner membrane. Functionally, f(1)F(0) ATP synthase produces ATP from ADP in the presence of a proton or sodium gradient. F-type ATPases consist of two structural domains, F(1) containing the extramembraneous catalytic core and F(0) containing the membrane proton channel, linked together by a central stalk and a peripheral stalk. During catalysis, ATP synthesis in the catalytic domain of F(1) is coupled via a rotary mechanism of the central stalk subunits to proton translocation. Component of the F(0) channel, it forms part of the peripheral stalk, linking F(1) to F(0). The chain is ATP synthase subunit b from Thermodesulfovibrio yellowstonii (strain ATCC 51303 / DSM 11347 / YP87).